A 61-amino-acid chain; its full sequence is Large ribosomal subunit protein uL30 (61 aa).

The protein belongs to the universal ribosomal protein uL30 family. In terms of assembly, part of the 50S ribosomal subunit.

In Petrotoga mobilis (strain DSM 10674 / SJ95), this protein is Large ribosomal subunit protein uL30.